Here is a 328-residue protein sequence, read N- to C-terminus: 4-hydroxythreonine-4-phosphate dehydrogenase (328 aa).

The substrate site is built by His-134 and Thr-135. Residues His-164, His-209, and His-265 each contribute to the a divalent metal cation site. Lys-273, Asn-282, and Arg-291 together coordinate substrate.

It belongs to the PdxA family. In terms of assembly, homodimer. It depends on Zn(2+) as a cofactor. The cofactor is Mg(2+). Co(2+) is required as a cofactor.

The protein resides in the cytoplasm. The enzyme catalyses 4-(phosphooxy)-L-threonine + NAD(+) = 3-amino-2-oxopropyl phosphate + CO2 + NADH. The protein operates within cofactor biosynthesis; pyridoxine 5'-phosphate biosynthesis; pyridoxine 5'-phosphate from D-erythrose 4-phosphate: step 4/5. Its function is as follows. Catalyzes the NAD(P)-dependent oxidation of 4-(phosphooxy)-L-threonine (HTP) into 2-amino-3-oxo-4-(phosphooxy)butyric acid which spontaneously decarboxylates to form 3-amino-2-oxopropyl phosphate (AHAP). In Vibrio vulnificus (strain CMCP6), this protein is 4-hydroxythreonine-4-phosphate dehydrogenase.